A 248-amino-acid chain; its full sequence is MSICLIAEEGADSGALSSLAERWGLVSDPNAVMALVLTTERLELRKQDEPKLGAIFVDFVAGPMAHRRRFGGGRGEAVAKAVGIKKDYLPDVVDATAGLGRDAFVLAALGCHVRMVERNPVVAALLDDGLKRGYQDAEIGPWLRERLTLLHASSMTALRDITPPPDVVYLDPMFPHKQKSALVKKEMRVFQSLVGADDDADALLEPARALAKKRVVVKRPDYAPPLAGVPAQSMLETKSHRFDFYLPV.

Residues 101 to 102, 117 to 118, 153 to 154, and aspartate 171 contribute to the S-adenosyl-L-methionine site; these read RD, ER, and SS.

Belongs to the methyltransferase superfamily. RsmJ family.

The protein resides in the cytoplasm. The catalysed reaction is guanosine(1516) in 16S rRNA + S-adenosyl-L-methionine = N(2)-methylguanosine(1516) in 16S rRNA + S-adenosyl-L-homocysteine + H(+). Its function is as follows. Specifically methylates the guanosine in position 1516 of 16S rRNA. This is Ribosomal RNA small subunit methyltransferase J from Pectobacterium atrosepticum (strain SCRI 1043 / ATCC BAA-672) (Erwinia carotovora subsp. atroseptica).